A 219-amino-acid polypeptide reads, in one-letter code: 7-cyano-7-deazaguanine synthase 2 (219 aa).

8–18 (YSGGMDSFTAL) provides a ligand contact to ATP. The Zn(2+) site is built by Cys-185, Cys-193, Cys-196, and Cys-199.

Belongs to the QueC family. The cofactor is Zn(2+).

It carries out the reaction 7-carboxy-7-deazaguanine + NH4(+) + ATP = 7-cyano-7-deazaguanine + ADP + phosphate + H2O + H(+). The protein operates within purine metabolism; 7-cyano-7-deazaguanine biosynthesis. Functionally, catalyzes the ATP-dependent conversion of 7-carboxy-7-deazaguanine (CDG) to 7-cyano-7-deazaguanine (preQ(0)). This chain is 7-cyano-7-deazaguanine synthase 2, found in Colwellia psychrerythraea (strain 34H / ATCC BAA-681) (Vibrio psychroerythus).